The following is a 505-amino-acid chain: Maturase K (505 aa).

It belongs to the intron maturase 2 family. MatK subfamily.

It is found in the plastid. Its subcellular location is the chloroplast. Functionally, usually encoded in the trnK tRNA gene intron. Probably assists in splicing its own and other chloroplast group II introns. The sequence is that of Maturase K from Blitum bonus-henricus (Good King Henry).